The following is a 496-amino-acid chain: MDEDLVVALRLQEEWDVQAARRAAAREPLSLVDASWELVDPTPDLQALFLQFNDRFFWGQLEAVEVKWSVRMTLCAGICTYEGRGGMCSIRLSEPLLKLRPRKDLVETLLHEMIHAYLFVTNNDKDREGHGPEFCKHMHRINQLTGANITVYHTFHDEVDEYRRHWWRCNGPCQHKQPYYGYVKRATNRAPSAHDYWWADHQKTCGGTYIKIKEPENYAKKGRGKTKAGKQPTSAVENKDKLCRGEAQPLIPFSGKGYVLGDTSTCPSAGKLNTSHMVNDTKGLSGQDHSASGLKLDSNVEVKCEQNGLPNKKPHLVTPLPTASHQSVLSSYFPRVSVANQKAFRNVNGSPVKSGTIDGTKHSASAGAQRKVPPSRASLRNSSKVTAPASATVTSAAGTSAAISREESGSEDQFLNKRPRLEDRTALNNIKEQTQSGGDLEDSSRPTAISTPRSSGGQRRLVNCPVCQGVVLESQINEHLDRCLEGSKTNLRPRRV.

An N-acetylmethionine modification is found at Met-1. The 168-residue stretch at 45–212 (LQALFLQFND…KTCGGTYIKI (168 aa)) folds into the SprT-like domain. Residue His-111 participates in Zn(2+) binding. The active site involves Glu-112. Residues His-115 and His-130 each contribute to the Zn(2+) site. Lys-230 is modified (N6-acetyllysine). The short motif at 253 to 261 (FSGKGYVLG) is the SHP-box element. Ser-268 carries the phosphoserine modification. Lys-303 is covalently cross-linked (Glycyl lysine isopeptide (Lys-Gly) (interchain with G-Cter in SUMO2)). Residues 326–333 (QSVLSSYF) carry the PIP-box motif. Lys-342 participates in a covalent cross-link: Glycyl lysine isopeptide (Lys-Gly) (interchain with G-Cter in SUMO2); alternate. Residue Lys-342 forms a Glycyl lysine isopeptide (Lys-Gly) (interchain with G-Cter in ubiquitin); alternate linkage. The tract at residues 346-459 (NVNGSPVKSG…STPRSSGGQR (114 aa)) is disordered. Lys-361 is covalently cross-linked (Glycyl lysine isopeptide (Lys-Gly) (interchain with G-Cter in SUMO2)). Over residues 382–403 (SSKVTAPASATVTSAAGTSAAI) the composition is skewed to low complexity. Ser-383 is subject to Phosphoserine. The Nuclear localization signal motif lies at 412 to 423 (DQFLNKRPRLED). 2 stretches are compositionally biased toward polar residues: residues 426-437 (ALNNIKEQTQSG) and 445-457 (RPTA…SSGG). Lys-431 participates in a covalent cross-link: Glycyl lysine isopeptide (Lys-Gly) (interchain with G-Cter in SUMO2). A UBZ4-type zinc finger spans residues 461-488 (LVNCPVCQGVVLESQINEHLDRCLEGSK). The Zn(2+) site is built by Cys-464, Cys-467, His-479, and Cys-483.

It belongs to the Spartan family. In terms of assembly, homodimer. Interacts (VIA PIP-box) with PCNA (when ubiquitinated). Interacts (via its SHP-box) with VCP/p97. Interacts with RAD18. Interacts with KCTD13 and POLD3. It depends on Zn(2+) as a cofactor. Post-translationally, autocatalytically cleaved in response to double-stranded DNA-binding: autocatalytic cleavage takes place in trans and leads to inactivation. In terms of processing, monoubiquitinated; monoubiquitination promotes exclusion from chromatin. Deubiquitinated by VCPIP1: deubiquitination is required for subsequent acetylation and recruitment to chromatin and DNA damage sites. Acetylated following deubiquitination by VCPIP1, leading to recruitment to chromatin and DNA damage sites. Post-translationally, phosphorylation by CHEK1 promotes recruitment to chromatin.

It localises to the nucleus. Its subcellular location is the chromosome. DNA-binding activates the protease activity: single-stranded DNA-binding specifically activates ability to cleave covalent DNA-protein cross-links (DPCs). In contrast, double-stranded DNA-binding specifically activates autocatalytic cleavage, and subsequent inactivation. Functionally, DNA-dependent metalloendopeptidase that mediates the proteolytic cleavage of covalent DNA-protein cross-links (DPCs) during DNA synthesis, thereby playing a key role in maintaining genomic integrity. DPCs are highly toxic DNA lesions that interfere with essential chromatin transactions, such as replication and transcription, and which are induced by reactive agents, such as UV light or formaldehyde. Associates with the DNA replication machinery and specifically removes DPCs during DNA synthesis. Catalyzes proteolytic cleavage of the HMCES DNA-protein cross-link following unfolding by the BRIP1/FANCJ helicase. Acts as a pleiotropic protease for DNA-binding proteins cross-linked with DNA, such as TOP1, TOP2A, histones H3 and H4. Mediates degradation of DPCs that are not ubiquitinated, while it is not able to degrade ubiquitinated DPCs. SPRTN activation requires polymerase collision with DPCs followed by helicase bypass of DPCs. Involved in recruitment of VCP/p97 to sites of DNA damage. Also acts as an activator of CHEK1 during normal DNA replication by mediating proteolytic cleavage of CHEK1, thereby promoting CHEK1 removal from chromatin and subsequent activation. Does not activate CHEK1 in response to DNA damage. May also act as a 'reader' of ubiquitinated PCNA: recruited to sites of UV damage and interacts with ubiquitinated PCNA and RAD18, the E3 ubiquitin ligase that monoubiquitinates PCNA. Facilitates chromatin association of RAD18 and is required for efficient PCNA monoubiquitination, promoting a feed-forward loop to enhance PCNA ubiquitination and translesion DNA synthesis. The polypeptide is DNA-dependent metalloprotease SPRTN (Rattus norvegicus (Rat)).